A 196-amino-acid chain; its full sequence is MAASAWCCLRCCRDGGTGHIPLKEMPAVQLDTQHMGTDVVIVKNGRRICGTGGCLASAPLHQNKSYFEFKIQSTGIWGIGVATQKVNLNQIPLGRDMHSLVMRNDGALYHNNEEKNRLPANSLPQEGDVVGITYDHVELNVYLNGKNMHCPASGIRGTVYPVVYVDDSAILDCQFSEFYHTPPPGFEKILFEQQIF.

N-acetylalanine is present on A2. Positions 2–184 (AASAWCCLRC…FSEFYHTPPP (183 aa)) constitute a B30.2/SPRY domain.

This chain is SPRY domain-containing protein 7 (Spryd7), found in Mus musculus (Mouse).